Here is a 179-residue protein sequence, read N- to C-terminus: Ribosome maturation factor RimM (179 aa).

The PRC barrel domain occupies 95–174 (KDEFFYFDIL…QIFCTQDAFL (80 aa)).

Belongs to the RimM family. As to quaternary structure, binds ribosomal protein uS19.

The protein resides in the cytoplasm. Its function is as follows. An accessory protein needed during the final step in the assembly of 30S ribosomal subunit, possibly for assembly of the head region. Essential for efficient processing of 16S rRNA. May be needed both before and after RbfA during the maturation of 16S rRNA. It has affinity for free ribosomal 30S subunits but not for 70S ribosomes. The protein is Ribosome maturation factor RimM of Campylobacter jejuni subsp. jejuni serotype O:2 (strain ATCC 700819 / NCTC 11168).